The sequence spans 375 residues: Succinyl-diaminopimelate desuccinylase (375 aa).

Residue His66 participates in Zn(2+) binding. Asp68 is an active-site residue. Asp99 is a binding site for Zn(2+). The active-site Proton acceptor is Glu133. 3 residues coordinate Zn(2+): Glu134, Glu162, and His348.

It belongs to the peptidase M20A family. DapE subfamily. In terms of assembly, homodimer. Zn(2+) is required as a cofactor. It depends on Co(2+) as a cofactor.

It catalyses the reaction N-succinyl-(2S,6S)-2,6-diaminopimelate + H2O = (2S,6S)-2,6-diaminopimelate + succinate. It participates in amino-acid biosynthesis; L-lysine biosynthesis via DAP pathway; LL-2,6-diaminopimelate from (S)-tetrahydrodipicolinate (succinylase route): step 3/3. Catalyzes the hydrolysis of N-succinyl-L,L-diaminopimelic acid (SDAP), forming succinate and LL-2,6-diaminopimelate (DAP), an intermediate involved in the bacterial biosynthesis of lysine and meso-diaminopimelic acid, an essential component of bacterial cell walls. In Pectobacterium atrosepticum (strain SCRI 1043 / ATCC BAA-672) (Erwinia carotovora subsp. atroseptica), this protein is Succinyl-diaminopimelate desuccinylase.